The chain runs to 208 residues: FMN-dependent NADH:quinone oxidoreductase (208 aa).

FMN is bound by residues 17 to 19, 99 to 102, and 143 to 146; these read SNS, MWNL, and SRGG.

This sequence belongs to the azoreductase type 1 family. Homodimer. The cofactor is FMN.

The enzyme catalyses 2 a quinone + NADH + H(+) = 2 a 1,4-benzosemiquinone + NAD(+). It catalyses the reaction N,N-dimethyl-1,4-phenylenediamine + anthranilate + 2 NAD(+) = 2-(4-dimethylaminophenyl)diazenylbenzoate + 2 NADH + 2 H(+). Functionally, quinone reductase that provides resistance to thiol-specific stress caused by electrophilic quinones. Also exhibits azoreductase activity. Catalyzes the reductive cleavage of the azo bond in aromatic azo compounds to the corresponding amines. This chain is FMN-dependent NADH:quinone oxidoreductase, found in Staphylococcus aureus (strain MRSA252).